A 313-amino-acid chain; its full sequence is Carbamate kinase 2 (313 aa).

Belongs to the carbamate kinase family.

It localises to the cytoplasm. It catalyses the reaction hydrogencarbonate + NH4(+) + ATP = carbamoyl phosphate + ADP + H2O + H(+). The protein operates within metabolic intermediate metabolism; carbamoyl phosphate degradation; CO(2) and NH(3) from carbamoyl phosphate: step 1/1. The chain is Carbamate kinase 2 (arcC2) from Staphylococcus aureus (strain Mu50 / ATCC 700699).